Here is a 253-residue protein sequence, read N- to C-terminus: uncharacterized protein (253 aa).

An N-terminal signal peptide occupies residues 1–16; it reads MCVVYRTSVLILLASG. Residue Cys17 is the site of N-palmitoyl cysteine attachment. Cys17 is lipidated: S-diacylglycerol cysteine.

It belongs to the staphylococcal tandem lipoprotein family.

The protein resides in the cell membrane. This is an uncharacterized protein from Staphylococcus aureus (strain N315).